Consider the following 46-residue polypeptide: L-amino-acid oxidase (46 aa).

N31 carries N-linked (GlcNAc...) asparagine glycosylation.

It belongs to the flavin monoamine oxidase family. FIG1 subfamily. It depends on FAD as a cofactor.

It is found in the secreted. Its subcellular location is the lysosome. The protein resides in the cytoplasmic vesicle. The protein localises to the secretory vesicle. It localises to the acrosome. The enzyme catalyses an L-alpha-amino acid + O2 + H2O = a 2-oxocarboxylate + H2O2 + NH4(+). The catalysed reaction is L-tryptophan + O2 + H2O = indole-3-pyruvate + H2O2 + NH4(+). It carries out the reaction L-phenylalanine + O2 + H2O = 3-phenylpyruvate + H2O2 + NH4(+). It catalyses the reaction L-tyrosine + O2 + H2O = 3-(4-hydroxyphenyl)pyruvate + H2O2 + NH4(+). The enzyme catalyses L-arginine + O2 + H2O = 5-guanidino-2-oxopentanoate + H2O2 + NH4(+). The protein operates within amino-acid degradation; L-tryptophan degradation via pyruvate pathway. Secreted L-amino-acid oxidase that acts as a key immunoregulator. Has preference for L-aromatic amino acids: converts phenylalanine (Phe), tyrosine (Tyr) and tryptophan (Trp) to phenylpyruvic acid (PP), hydroxyphenylpyruvic acid (HPP), and indole-3-pyruvic acid (I3P), respectively. Also has weak L-arginine oxidase activity. Acts as a negative regulator of anti-tumor immunity by mediating Trp degradation via an indole pyruvate pathway that activates the transcription factor AHR. IL4I1-mediated Trp catabolism generates I3P, giving rise to indole metabolites (indole-3-acetic acid (IAA) and indole-3-aldehyde (I3A)) and kynurenic acid, which act as ligands for AHR, a ligand-activated transcription factor that plays important roles in immunity and cancer. AHR activation by indoles following IL4I1-mediated Trp degradation enhances tumor progression by promoting cancer cell motility and suppressing adaptive immunity. Also has an immunoregulatory function in some immune cells, probably by mediating Trp degradation and promoting downstream AHR activation: inhibits T-cell activation and proliferation, promotes the differentiation of naive CD4(+) T-cells into FOXP3(+) regulatory T-cells (Treg) and regulates the development and function of B-cells. Also regulates M2 macrophage polarization by inhibiting T-cell activation. Also has antibacterial properties by inhibiting growth of Gram negative and Gram positive bacteria through the production of NH4(+) and H2O2. The chain is L-amino-acid oxidase from Mus spretus (Western Mediterranean mouse).